Here is a 2596-residue protein sequence, read N- to C-terminus: Protein unc-79 homolog (2596 aa).

A phosphoserine mark is found at Ser754 and Ser758. Disordered stretches follow at residues 907–931 (GPEGEEEENPAAKHGENPGNRTVPS), 1539–1573 (SQRQNDHHGRSRQNSATRPDNTEIPKNPGTEGFQE), 1594–1632 (VDSPGKPAPREDLDLIDLSSDSTSGPEKHSILSTSDSDS), 1648–1679 (EEEEMMNQGNGGALGNNAASSPSIPSQPSVLS), 1695–1832 (KDFS…FKIQ), and 1863–1909 (LGEQ…KQIQ). Positions 1594 to 1606 (VDSPGKPAPREDL) are enriched in basic and acidic residues. Over residues 1662-1679 (GNNAASSPSIPSQPSVLS) the composition is skewed to low complexity. Over residues 1704–1713 (NHQSASNEDS) the composition is skewed to polar residues. A compositionally biased stretch (basic and acidic residues) spans 1726–1735 (ELSKSEELRE). Positions 1897–1908 (ETSSHSSISKQI) are enriched in polar residues. The next 2 membrane-spanning stretches (helical) occupy residues 2184-2204 (LLSFVIQNAVFTLAYLVELCG) and 2426-2446 (CVLHMCSLFHAFIFAQLWTVY).

Belongs to the unc-79 family. In terms of assembly, NALCN complex consists of NALCN and auxiliary subunits, UNC79, UNC80 and NACL1. These auxiliary subunits are essential for the NALCN channel function. UNC80 bridges NALCN to UNC79. Interacts with NALCN. Interacts with UNC80.

It is found in the cell membrane. Its function is as follows. Auxiliary subunit of the NALCN sodium channel complex. The NALCN sodium channel complex is a voltage-gated ion channel responsible for the resting Na(+) permeability that controls neuronal excitability. Activated by neuropeptides substance P, neurotensin, and extracellular calcium that regulates neuronal excitability by controlling the sizes of NALCN-dependent sodium-leak current. This Mus musculus (Mouse) protein is Protein unc-79 homolog (Unc79).